A 427-amino-acid chain; its full sequence is Glucose-1-phosphate adenylyltransferase (427 aa).

Alpha-D-glucose 1-phosphate is bound by residues Tyr-121, Gly-186, 201–202, and Ser-219; that span reads EK.

It belongs to the bacterial/plant glucose-1-phosphate adenylyltransferase family. Homotetramer.

It carries out the reaction alpha-D-glucose 1-phosphate + ATP + H(+) = ADP-alpha-D-glucose + diphosphate. It participates in glycan biosynthesis; glycogen biosynthesis. Functionally, involved in the biosynthesis of ADP-glucose, a building block required for the elongation reactions to produce glycogen. Catalyzes the reaction between ATP and alpha-D-glucose 1-phosphate (G1P) to produce pyrophosphate and ADP-Glc. This is Glucose-1-phosphate adenylyltransferase from Corynebacterium diphtheriae (strain ATCC 700971 / NCTC 13129 / Biotype gravis).